We begin with the raw amino-acid sequence, 900 residues long: DNA mismatch repair protein MutS (900 aa).

637–644 (GPNMAGKS) serves as a coordination point for ATP.

It belongs to the DNA mismatch repair MutS family.

Its function is as follows. This protein is involved in the repair of mismatches in DNA. It is possible that it carries out the mismatch recognition step. This protein has a weak ATPase activity. This is DNA mismatch repair protein MutS from Methanosarcina mazei (strain ATCC BAA-159 / DSM 3647 / Goe1 / Go1 / JCM 11833 / OCM 88) (Methanosarcina frisia).